The chain runs to 1522 residues: ATP-binding cassette sub-family C member 3 (1522 aa).

Over 1-32 (MDRLCGSGELGSKFWDSNLTVYTNTPDLTPCF) the chain is Extracellular. N18 carries an N-linked (GlcNAc...) asparagine glycan. A helical transmembrane segment spans residues 33–53 (QNSLLAWVPCIYLWAALPCYL). Residues 54–73 (FYLRHHRLGYIVLSCLSRLK) are Cytoplasmic-facing. Residues 74–94 (TALGVLLWCISWVDLFYSFHG) form a helical membrane-spanning segment. Residues 95–99 (LVHGS) are Extracellular-facing. The helical transmembrane segment at 100–120 (SPAPVFFITPLLVGITMLLAT) threads the bilayer. The Cytoplasmic segment spans residues 121–132 (LLIQYERLRGVR). Residues 133 to 153 (SSGVLIIFWLLCVICAIIPFR) traverse the membrane as a helical segment. The Extracellular segment spans residues 154-171 (SKILLALAEGKILDPFRF). Residues 172–192 (TTFYIYFALVLCAFILSCFQE) traverse the membrane as a helical segment. Residues 193-301 (KPPLFSPENL…KTKKPSFLRA (109 aa)) are Cytoplasmic-facing. The chain crosses the membrane as a helical span at residues 302–322 (LVRTFTSSLLMGACFKLIQDL). Residues 310–592 (LLMGACFKLI…LPQLISGMTQ (283 aa)) enclose the ABC transmembrane type-1 1 domain. Residues 323-347 (SPSSTHSCSASSSGLFRPHGPYWWG) are Extracellular-facing. The chain crosses the membrane as a helical span at residues 348–368 (FLLAGLMFVSSTMQTLILHQH). Residues 369 to 424 (YHCIFVMALRIRTAIIGVIYRKALTITNSVKREYTVGEMVNLMSVDAQRFMDVSPF) are Cytoplasmic-facing. A helical transmembrane segment spans residues 425 to 445 (INLLWSAPLQVILAIYFLWQI). The Extracellular segment spans residues 446 to 448 (LGP). A helical transmembrane segment spans residues 449-469 (SALAGVAVIVLLIPLNGAVSM). At 470 to 531 (KMKTYQVQQM…LLRKGAYLQA (62 aa)) the chain is on the cytoplasmic side. Residues 532 to 552 (ISTFIWVCTPFMVTLITLGVY) form a helical membrane-spanning segment. Topologically, residues 553–574 (VCVDKNNVLDAEKAFVSLSLFN) are extracellular. A helical membrane pass occupies residues 575 to 595 (ILKIPLNLLPQLISGMTQTSV). At 596–958 (SLKRIQDFLN…VKLSVYWDYA (363 aa)) the chain is on the cytoplasmic side. The 225-residue stretch at 625 to 849 (ITIHNGTFSW…DGSFANFLRN (225 aa)) folds into the ABC transporter 1 domain. An ATP-binding site is contributed by 659 to 666 (GPVGCGKS). A phosphoserine mark is found at S902 and S905. A helical membrane pass occupies residues 959-979 (KSVGLCTTLFICLLYAGQNAV). Residues 966–1247 (TLFICLLYAG…MIRTLSDLES (282 aa)) form the ABC transmembrane type-1 2 domain. At 980 to 1016 (AIGANVWLSAWTNDVEEHGQQNNTSVRLGVYATLGIL) the chain is on the extracellular side. Residues N1001 and N1002 are each glycosylated (N-linked (GlcNAc...) asparagine). A helical membrane pass occupies residues 1017–1037 (QGLLVMLSAFTMVVGAIQAAR). The Cytoplasmic segment spans residues 1038-1080 (LLHTALLHNQIRAPQSFFDTTPSGRILNRFSKDIYVIHEVLAP). A helical transmembrane segment spans residues 1081–1101 (TILMLFNSFYTSISTIVVIVA). Residue S1102 is a topological domain, extracellular. Residues 1103–1123 (TPLFCVVVLPLAVFYGFVQRF) form a helical membrane-spanning segment. The Cytoplasmic portion of the chain corresponds to 1124–1194 (YVATSRQLKR…ASNRWLGVHV (71 aa)). A helical transmembrane segment spans residues 1195 to 1215 (EFVGNCVVLFSALFAVIGRNS). Residues 1216-1217 (LN) are Extracellular-facing. Residues 1218–1238 (PGLVGLSVSYALQVTLSLNWM) traverse the membrane as a helical segment. At 1239 to 1522 (IRTLSDLESN…YGMAKDAGLA (284 aa)) the chain is on the cytoplasmic side. Residues 1286-1518 (FRNYSVRYRP…GGIFYGMAKD (233 aa)) enclose the ABC transporter 2 domain. 1318–1325 (GRTGAGKS) provides a ligand contact to ATP.

It belongs to the ABC transporter superfamily. ABCC family. Conjugate transporter (TC 3.A.1.208) subfamily. As to expression, expressed in lung, ileum, colon and liver. Higher in liver of Eisai hyperbilirubinemic rats.

Its subcellular location is the basolateral cell membrane. The protein resides in the basal cell membrane. It catalyses the reaction an S-substituted glutathione(in) + ATP + H2O = an S-substituted glutathione(out) + ADP + phosphate + H(+). The catalysed reaction is ATP + H2O + xenobioticSide 1 = ADP + phosphate + xenobioticSide 2.. The enzyme catalyses taurocholate(in) + ATP + H2O = taurocholate(out) + ADP + phosphate + H(+). It carries out the reaction glycocholate(in) + ATP + H2O = glycocholate(out) + ADP + phosphate + H(+). It catalyses the reaction taurolithocholate 3-sulfate(in) + ATP + H2O = taurolithocholate 3-sulfate(out) + ADP + phosphate + H(+). The catalysed reaction is 17beta-estradiol 17-O-(beta-D-glucuronate)(in) + ATP + H2O = 17beta-estradiol 17-O-(beta-D-glucuronate)(out) + ADP + phosphate + H(+). The enzyme catalyses dehydroepiandrosterone 3-sulfate(in) + ATP + H2O = dehydroepiandrosterone 3-sulfate(out) + ADP + phosphate + H(+). It carries out the reaction leukotriene C4(in) + ATP + H2O = leukotriene C4(out) + ADP + phosphate + H(+). It catalyses the reaction (4Z,15Z)-bilirubin IXalpha C8-beta-D-glucuronoside(in) + ATP + H2O = (4Z,15Z)-bilirubin IXalpha C8-beta-D-glucuronoside(out) + ADP + phosphate + H(+). The catalysed reaction is (4Z,15Z)-bilirubin IXalpha C8,C12-beta-D-bisglucuronoside(in) + ATP + H2O = (4Z,15Z)-bilirubin IXalpha C8,C12-beta-D-bisglucuronoside(out) + ADP + phosphate + H(+). The enzyme catalyses taurochenodeoxycholate 3-sulfate(in) + ATP + H2O = taurochenodeoxycholate 3-sulfate(out) + ADP + phosphate + H(+). Functionally, ATP-dependent transporter of the ATP-binding cassette (ABC) family that binds and hydrolyzes ATP to enable active transport of various substrates including many drugs, toxicants and endogenous compound across cell membranes. Transports glucuronide conjugates such as bilirubin diglucuronide, estradiol-17-beta-o-glucuronide and GSH conjugates such as leukotriene C4 (LTC4). Transports also various bile salts (taurocholate, glycocholate, taurochenodeoxycholate-3-sulfate, taurolithocholate- 3-sulfate). Does not contribute substantially to bile salt physiology but provides an alternative route for the export of bile acids and glucuronides from cholestatic hepatocytes. May contribute to regulate the transport of organic compounds in testes across the blood-testis-barrier. The sequence is that of ATP-binding cassette sub-family C member 3 (Abcc3) from Rattus norvegicus (Rat).